A 904-amino-acid chain; its full sequence is MDVLGENEALQQFFEAQGASGTLENPALDTSLLEEFLGNDFDLGALQRQLPDTPPYSASDPRSPPQVKGACCRTPRPPAGRIPAAFLHSTTAPGPLPEHPSQSMAGQTHSSFQNGYPESSHPATCRHQTGPSRLGTSCSFHQQPLCHVPGSSLPPTKKRKHSQIQEDSWDCSSWAHYFRPMTTRSQSIEVQDHDREGRNGMPVDQCSPALKWQPYQSVPWHSLLNSRYEKLPEVGYQVVTDKGFTFSPVDEAFVCQKKNHFQITVHIQVWGSPKFVKTQVGLKPIEKFYLKAFGIKVEATNQVIAIEQSQADRSKKTFDPVKIDLLTDQVTKVTLGRLHFSETTANNMRKKGKPNPDQRYFMLVVGLYAANQDQFYLLAAHISERIIVRASNPGQFENDSDALWQRGQVPESIVCHGRVGINTDTPDEALVVCGNMKVMGTVMHPSDSRVKENIQEVDTNEQLRRIAQMRIVQYDYKPEFASAMGINTAHQTGMIAQEVQEILPRAVREVGDVTGGNGETLENFLMVDKDQIFMENVGAVKQLCKLTNNLEERIEELEIWNKKLARLKRLSSSWKSSISEASSISKLSRAVSASSARRTGSKKPTKVSFSGRKQSCPNWVFQTLVVVLIAVMAFCALTIVALYILSLKDQDRRSPNLPLSNMTSSPEPALSSTAPTSAPHTTPETTQTSLQVPEITFCEILPCQETYCCPVWGPRILFSSPAQRQLEAEREIHQRQWAEDKSKSFLTSSALISPDWESDWIDTTIASIQIVEIQQMIDRRYCSRMLHCGPGHYNYNIPVNKNTPTNVKFSLEINTTEPLIVFQCKYTLGNICFRSQRERTQSDGEDAQMTQGYQHIWRLPVARFSDSAYHFRVAAPDLADCSTDPFFAGIFFTDYFFYFYRRCN.

The segment at 46–132 (LQRQLPDTPP…ATCRHQTGPS (87 aa)) is disordered. Positions 100-117 (PSQSMAGQTHSSFQNGYP) are enriched in polar residues. The NDT80 DNA-binding region spans 108–400 (THSSFQNGYP…SNPGQFENDS (293 aa)). Positions 446–554 (SDSRVKENIQ…KLTNNLEERI (109 aa)) constitute a Peptidase S74 domain. A coiled-coil region spans residues 538–575 (GAVKQLCKLTNNLEERIEELEIWNKKLARLKRLSSSWK). Residues 624-644 (LVVVLIAVMAFCALTIVALYI) traverse the membrane as a helical segment. A disordered region spans residues 656–688 (NLPLSNMTSSPEPALSSTAPTSAPHTTPETTQT). Positions 663–688 (TSSPEPALSSTAPTSAPHTTPETTQT) are enriched in low complexity.

The protein belongs to the MRF family.

The protein resides in the membrane. The polypeptide is Myelin regulatory factor-like protein (Myrfl) (Mus musculus (Mouse)).